Reading from the N-terminus, the 154-residue chain is 6,7-dimethyl-8-ribityllumazine synthase (154 aa).

Residues W22, A56 to E58, and C80 to V82 contribute to the 5-amino-6-(D-ribitylamino)uracil site. D85–T86 is a (2S)-2-hydroxy-3-oxobutyl phosphate binding site. Residue H88 is the Proton donor of the active site. N113 contributes to the 5-amino-6-(D-ribitylamino)uracil binding site. Position 127 (R127) interacts with (2S)-2-hydroxy-3-oxobutyl phosphate.

It belongs to the DMRL synthase family. Forms an icosahedral capsid composed of 60 subunits, arranged as a dodecamer of pentamers.

It carries out the reaction (2S)-2-hydroxy-3-oxobutyl phosphate + 5-amino-6-(D-ribitylamino)uracil = 6,7-dimethyl-8-(1-D-ribityl)lumazine + phosphate + 2 H2O + H(+). Its pathway is cofactor biosynthesis; riboflavin biosynthesis; riboflavin from 2-hydroxy-3-oxobutyl phosphate and 5-amino-6-(D-ribitylamino)uracil: step 1/2. In terms of biological role, catalyzes the formation of 6,7-dimethyl-8-ribityllumazine by condensation of 5-amino-6-(D-ribitylamino)uracil with 3,4-dihydroxy-2-butanone 4-phosphate. This is the penultimate step in the biosynthesis of riboflavin. This chain is 6,7-dimethyl-8-ribityllumazine synthase, found in Xylella fastidiosa (strain M23).